Reading from the N-terminus, the 238-residue chain is Ribonuclease PH (238 aa).

Phosphate contacts are provided by residues Arg86 and 124–126; that span reads GTR.

This sequence belongs to the RNase PH family. Homohexameric ring arranged as a trimer of dimers.

It carries out the reaction tRNA(n+1) + phosphate = tRNA(n) + a ribonucleoside 5'-diphosphate. Functionally, phosphorolytic 3'-5' exoribonuclease that plays an important role in tRNA 3'-end maturation. Removes nucleotide residues following the 3'-CCA terminus of tRNAs; can also add nucleotides to the ends of RNA molecules by using nucleoside diphosphates as substrates, but this may not be physiologically important. Probably plays a role in initiation of 16S rRNA degradation (leading to ribosome degradation) during starvation. This is Ribonuclease PH from Brucella abortus (strain S19).